A 298-amino-acid chain; its full sequence is N-acetylmuramic acid 6-phosphate etherase (298 aa).

Positions 55–218 (IHAQVSGGGR…STGLMIKSGK (164 aa)) constitute an SIS domain. Glu-83 serves as the catalytic Proton donor. Residue Glu-114 is part of the active site.

The protein belongs to the GCKR-like family. MurNAc-6-P etherase subfamily. Homodimer.

It catalyses the reaction N-acetyl-D-muramate 6-phosphate + H2O = N-acetyl-D-glucosamine 6-phosphate + (R)-lactate. The protein operates within amino-sugar metabolism; 1,6-anhydro-N-acetylmuramate degradation. It functions in the pathway amino-sugar metabolism; N-acetylmuramate degradation. It participates in cell wall biogenesis; peptidoglycan recycling. In terms of biological role, specifically catalyzes the cleavage of the D-lactyl ether substituent of MurNAc 6-phosphate, producing GlcNAc 6-phosphate and D-lactate. Together with AnmK, is also required for the utilization of anhydro-N-acetylmuramic acid (anhMurNAc) either imported from the medium or derived from its own cell wall murein, and thus plays a role in cell wall recycling. The protein is N-acetylmuramic acid 6-phosphate etherase of Escherichia coli O8 (strain IAI1).